Here is a 471-residue protein sequence, read N- to C-terminus: Sulfate adenylyltransferase subunit 1 (471 aa).

Positions 22 to 237 (KELLRFLTCG…LESVQITGAK (216 aa)) constitute a tr-type G domain. The segment at 31–38 (GSVDDGKS) is G1. 31–38 (GSVDDGKS) is a binding site for GTP. The segment at 89 to 93 (GITID) is G2. Positions 110 to 113 (DTPG) are G3. Residues 110–114 (DTPGH) and 165–168 (NKMD) contribute to the GTP site. The G4 stretch occupies residues 165-168 (NKMD). Positions 202 to 204 (SAL) are G5.

Belongs to the TRAFAC class translation factor GTPase superfamily. Classic translation factor GTPase family. CysN/NodQ subfamily. Heterodimer composed of CysD, the smaller subunit, and CysN.

The catalysed reaction is sulfate + ATP + H(+) = adenosine 5'-phosphosulfate + diphosphate. It participates in sulfur metabolism; hydrogen sulfide biosynthesis; sulfite from sulfate: step 1/3. In terms of biological role, with CysD forms the ATP sulfurylase (ATPS) that catalyzes the adenylation of sulfate producing adenosine 5'-phosphosulfate (APS) and diphosphate, the first enzymatic step in sulfur assimilation pathway. APS synthesis involves the formation of a high-energy phosphoric-sulfuric acid anhydride bond driven by GTP hydrolysis by CysN coupled to ATP hydrolysis by CysD. In Saccharophagus degradans (strain 2-40 / ATCC 43961 / DSM 17024), this protein is Sulfate adenylyltransferase subunit 1.